Reading from the N-terminus, the 104-residue chain is MVRYRVRSPSERPHEEYRQLVNWQEQGRNGQEEQGLSAEGGEVYGRTHQGYSSYRRRRCSRRRRYRIHRRRSRSCRRRRRRSCRYRRRPRRGCRSRRRRRCRRY.

Residues S8 and S10 each carry the phosphoserine modification. Residues W23–Y104 are disordered. A compositionally biased stretch (low complexity) spans Q24–G35. S37 bears the Phosphoserine mark. The segment covering Y54 to Y104 has biased composition (basic residues).

The protein belongs to the protamine P2 family. Interacts with TDRP. Post-translationally, proteolytic processing into mature chains is required for histone eviction during spermatogenesis. Transition proteins (TNP1 and TNP2) are required for processing. In terms of tissue distribution, testis.

It localises to the nucleus. The protein localises to the chromosome. Functionally, protamines substitute for histones in the chromatin of sperm during the haploid phase of spermatogenesis. They compact sperm DNA into a highly condensed, stable and inactive complex. The sequence is that of Protamine-2 (PRM2) from Callithrix jacchus (White-tufted-ear marmoset).